Here is a 992-residue protein sequence, read N- to C-terminus: ATP-dependent DNA helicase PIF7 (992 aa).

The N-terminal 21 residues, 1-21, are a transit peptide targeting the mitochondrion; sequence MWDGPLRSRQNLRTVAKLRSS. Disordered regions lie at residues 20 to 43, 145 to 182, and 190 to 209; these read SSGC…GETA, TVNK…TAAS, and LDSS…AVTQ. Composition is skewed to polar residues over residues 23-43, 173-182, and 191-208; these read CPLT…GETA, NVDNTTTAAS, and DSSS…QAVT. 237 to 244 contributes to the ATP binding site; it reads GGAGTGKS. Residues 651–670 mediate DNA binding; sequence QAYVALSRCTDVANLVIENF.

The protein belongs to the helicase family. PIF1 subfamily. In terms of assembly, monomer. Requires Mg(2+) as cofactor.

It is found in the mitochondrion matrix. Its subcellular location is the kinetoplast. The enzyme catalyses Couples ATP hydrolysis with the unwinding of duplex DNA at the replication fork by translocating in the 5'-3' direction. This creates two antiparallel DNA single strands (ssDNA). The leading ssDNA polymer is the template for DNA polymerase III holoenzyme which synthesizes a continuous strand.. It catalyses the reaction ATP + H2O = ADP + phosphate + H(+). DNA-dependent ATPase and 5'-3' DNA helicase required for the maintenance of mitochondrial (kinetoplast) genome stability. The protein is ATP-dependent DNA helicase PIF7 of Trypanosoma brucei brucei (strain 927/4 GUTat10.1).